An 83-amino-acid polypeptide reads, in one-letter code: Small ribosomal subunit protein bS18 (83 aa).

This sequence belongs to the bacterial ribosomal protein bS18 family. In terms of assembly, part of the 30S ribosomal subunit. Forms a tight heterodimer with protein bS6.

Functionally, binds as a heterodimer with protein bS6 to the central domain of the 16S rRNA, where it helps stabilize the platform of the 30S subunit. The chain is Small ribosomal subunit protein bS18 from Cytophaga hutchinsonii (strain ATCC 33406 / DSM 1761 / CIP 103989 / NBRC 15051 / NCIMB 9469 / D465).